The following is an 807-amino-acid chain: Glycerol-3-phosphate acyltransferase (807 aa).

The HXXXXD motif signature appears at 305-310 (CHRSHM).

This sequence belongs to the GPAT/DAPAT family.

The protein resides in the cell inner membrane. It carries out the reaction sn-glycerol 3-phosphate + an acyl-CoA = a 1-acyl-sn-glycero-3-phosphate + CoA. It participates in phospholipid metabolism; CDP-diacylglycerol biosynthesis; CDP-diacylglycerol from sn-glycerol 3-phosphate: step 1/3. This chain is Glycerol-3-phosphate acyltransferase, found in Aliivibrio fischeri (strain ATCC 700601 / ES114) (Vibrio fischeri).